Consider the following 909-residue polypeptide: ABC transporter B family member 1 (909 aa).

The segment at 1 to 36 is disordered; it reads MTKKNFNDEENESLLETYNKQQQKQSISTTNRSDQK. Over residues 14–36 the composition is skewed to polar residues; sequence LLETYNKQQQKQSISTTNRSDQK. Residues 85 to 105 traverse the membrane as a helical segment; the sequence is LFIQIVSLVILAGYLISINAL. A compositionally biased stretch (low complexity) spans 125-134; it reads TDSGSVSPTS. Residues 125–147 form a disordered region; that stretch reads TDSGSVSPTSTPSPTPTPTPSPT. Residues 135 to 145 show a composition bias toward pro residues; the sequence is TPSPTPTPTPS. Transmembrane regions (helical) follow at residues 182–202, 206–226, 275–295, 347–367, 392–412, 480–500, 572–592, and 607–627; these read FSTFDILLISYFISLFWLLLI, SFIYHTISYIITIIALIYNVI, IIIVIVLVGIPLMVLFLVLHI, LPIILAAMVALVFSSLTSLAM, LALVVIFVIGSISTLVRSWLF, VILLFITNWRLTLLMLGIVPV, GVFSGIVFLVAQLAIVLIVYV, and LTSFLLYTLSLAMSLAFISSL. The ABC transmembrane type-1 domain maps to 350 to 633; that stretch reads ILAAMVALVF…ISSLMTDFLK (284 aa). The region spanning 666–902 is the ABC transporter domain; it reads IELKDVEFSY…TDGIYHNLVK (237 aa). Residue 701–708 coordinates ATP; the sequence is GPSGGGKS.

The protein belongs to the ABC transporter superfamily. ABCB family.

The protein resides in the membrane. This chain is ABC transporter B family member 1 (abcB1), found in Dictyostelium discoideum (Social amoeba).